The sequence spans 1189 residues: RAB11-binding protein RELCH homolog (1189 aa).

Disordered regions lie at residues 1–65 (MAAG…PSVD) and 123–154 (SNPGNFERQSGTPPACKEQGVGPGGPLNRAGS). Over residues 19–36 (EQRQDGADTERSPSDEAQ) the composition is skewed to basic and acidic residues. Residues 124 to 134 (NPGNFERQSGT) are compositionally biased toward polar residues. The stretch at 172 to 205 (RESDERVAVLEFELRKAKETIQALRANLTQAAEC) forms a coiled coil. Residues 229-261 (EKRALNFLVNEYLLKNEYKLTSITFSDENDDQD) form the LisH domain. Residues 326–373 (QQQQEVVQELEYQISLLNSEKQSLAEQIKKLQSDIQALQRNVSSELTA) are a coiled coil. Residues 374-453 (GVKSIQSKEN…QSKSSVQFDQ (80 aa)) are disordered. Over residues 404–425 (ETDSSSDTTKTSTSTTIATDCT) the composition is skewed to low complexity. The segment covering 426–453 (ENSTTATQPHSKLKANGQQSKSSVQFDQ) has biased composition (polar residues). HEAT repeat units follow at residues 574-612 (LLPQCWEQINHKYPERRLLVAEACGALAPYLPKEIRSSL), 613-652 (VLSMLQQMLADDKADMVREAVVKSLGVIMGYIDDPDKYSQ), and 977-1015 (VVPALITLSSDPEISVRISTIPAFGTIMETVTQKELLER).

Its subcellular location is the recycling endosome. The protein resides in the golgi apparatus. The protein localises to the trans-Golgi network. In terms of biological role, may regulate intracellular cholesterol transport. In Danio rerio (Zebrafish), this protein is RAB11-binding protein RELCH homolog (relch).